The primary structure comprises 254 residues: Imidazole glycerol phosphate synthase subunit HisF (254 aa).

Active-site residues include D13 and D132.

Belongs to the HisA/HisF family. In terms of assembly, heterodimer of HisH and HisF.

The protein localises to the cytoplasm. The catalysed reaction is 5-[(5-phospho-1-deoxy-D-ribulos-1-ylimino)methylamino]-1-(5-phospho-beta-D-ribosyl)imidazole-4-carboxamide + L-glutamine = D-erythro-1-(imidazol-4-yl)glycerol 3-phosphate + 5-amino-1-(5-phospho-beta-D-ribosyl)imidazole-4-carboxamide + L-glutamate + H(+). Its pathway is amino-acid biosynthesis; L-histidine biosynthesis; L-histidine from 5-phospho-alpha-D-ribose 1-diphosphate: step 5/9. Its function is as follows. IGPS catalyzes the conversion of PRFAR and glutamine to IGP, AICAR and glutamate. The HisF subunit catalyzes the cyclization activity that produces IGP and AICAR from PRFAR using the ammonia provided by the HisH subunit. This is Imidazole glycerol phosphate synthase subunit HisF from Nautilia profundicola (strain ATCC BAA-1463 / DSM 18972 / AmH).